Consider the following 462-residue polypeptide: ATP synthase subunit beta (462 aa).

Residue 150 to 157 participates in ATP binding; sequence GGAGVGKT.

The protein belongs to the ATPase alpha/beta chains family. F-type ATPases have 2 components, CF(1) - the catalytic core - and CF(0) - the membrane proton channel. CF(1) has five subunits: alpha(3), beta(3), gamma(1), delta(1), epsilon(1). CF(0) has three main subunits: a(1), b(2) and c(9-12). The alpha and beta chains form an alternating ring which encloses part of the gamma chain. CF(1) is attached to CF(0) by a central stalk formed by the gamma and epsilon chains, while a peripheral stalk is formed by the delta and b chains. In this bacterium the a and b subunits are transcribed but do not seem to be translated, thus the ATP synthase consists of the alpha, beta, gamma, delta, epsilon and c subunits.

The protein resides in the cell membrane. It catalyses the reaction ATP + H2O + 4 H(+)(in) = ADP + phosphate + 5 H(+)(out). Produces ATP from ADP in the presence of a proton gradient across the membrane. The catalytic sites are hosted primarily by the beta subunits. This is ATP synthase subunit beta from Moorella thermoacetica (strain ATCC 39073 / JCM 9320).